Reading from the N-terminus, the 140-residue chain is uncharacterized protein (140 aa).

Positions 80–115 (KNGTRRHALPSPLEGSFQPGRQIPPPQTPSTDPQTL) are disordered.

This is an uncharacterized protein from Homo sapiens (Human).